The chain runs to 149 residues: Transcription antitermination protein NusB (149 aa).

This sequence belongs to the NusB family.

Involved in transcription antitermination. Required for transcription of ribosomal RNA (rRNA) genes. Binds specifically to the boxA antiterminator sequence of the ribosomal RNA (rrn) operons. The sequence is that of Transcription antitermination protein NusB from Hahella chejuensis (strain KCTC 2396).